The chain runs to 311 residues: Solute carrier family 25 member 48 (311 aa).

3 Solcar repeats span residues 3–86 (SFQL…TQRF), 101–205 (RTLS…LSEW), and 214–301 (PSPC…SLQA). Helical transmembrane passes span 9–29 (FAAGWIGGAASVIVGHPLDTV), 61–81 (GMSFPLASIAVYNSVVFGVFS), 107–127 (LLASMVAGVVSVGLGGPVDLI), 189–209 (VPGYCLYFIPYVFLSEWITPE), 217–237 (CAVWLAGGMAGAISWGTATPM), and 277–295 (ITVNAVRGFPMSAAMFLGY).

The protein belongs to the mitochondrial carrier (TC 2.A.29) family.

The protein resides in the mitochondrion inner membrane. This Homo sapiens (Human) protein is Solute carrier family 25 member 48 (SLC25A48).